Consider the following 404-residue polypeptide: Multidrug resistance protein MdtH (404 aa).

The Cytoplasmic portion of the chain corresponds to 1-12 (MSRVSQARNLGK). Residues 13–33 (YFLLIDNMLVVLGFFVVFPLI) traverse the membrane as a helical segment. Residues 34–98 (SIRFVDQMGW…GFATMGIAHE (65 aa)) lie on the Periplasmic side of the membrane. A helical transmembrane segment spans residues 99-116 (PWLLWFSCFLSGLGGTLF). The Cytoplasmic portion of the chain corresponds to 117 to 138 (DPPRSALVVKLIRPEQRGRFFS). The chain crosses the membrane as a helical span at residues 139-159 (LLMMQDSAGAVIGALLGSWLL). Over 160 to 164 (QYDFR) the chain is Periplasmic. A helical membrane pass occupies residues 165–185 (LVCAMGAILFIVCAIFNAWLL). Residues 186–213 (PAWKLSTVRTPVREGMRRVISDKRFVTY) are Cytoplasmic-facing. Residues 214–234 (VLTLAGYYMLAVQVMLMLPIM) form a helical membrane-spanning segment. The Periplasmic portion of the chain corresponds to 235–243 (VNDVAGSPA). A helical membrane pass occupies residues 244-264 (AVKWMYAIEACLSLTLLYPIA). At 265–276 (RWSEKRFRLEHR) the chain is on the cytoplasmic side. The chain crosses the membrane as a helical span at residues 277 to 297 (LMAGLLIMSLSMIPIGLAGNL). The Periplasmic portion of the chain corresponds to 298–299 (QQ). A helical transmembrane segment spans residues 300-320 (LFTLICAFYIGSVIAEPARET). At 321-339 (LSASLTDARARGSYMGFSR) the chain is on the cytoplasmic side. A helical transmembrane segment spans residues 340-360 (LGLAIGGAIGYIGGGWLFDMG). Residues 361 to 367 (KTLAQPE) are Periplasmic-facing. A helical transmembrane segment spans residues 368 to 388 (LPWMMLGIIGFITFLALGWQF). Residues 389 to 404 (SHKRTPRQYTGARRLI) lie on the Cytoplasmic side of the membrane.

Belongs to the major facilitator superfamily. DHA1 family. MdtH (TC 2.A.1.2.21) subfamily.

It localises to the cell inner membrane. In Salmonella arizonae (strain ATCC BAA-731 / CDC346-86 / RSK2980), this protein is Multidrug resistance protein MdtH.